We begin with the raw amino-acid sequence, 300 residues long: Tyrosine recombinase XerD (300 aa).

A Core-binding (CB) domain is found at 6-89; that stretch reads LFHKRLIEQF…ALKVFFHFLK (84 aa). A Tyr recombinase domain is found at 108–293; that stretch reads RLPSILSTEE…ASESLIEKFH (186 aa). Active-site residues include Arg-152, Lys-174, His-245, Arg-248, and His-271. The active-site O-(3'-phospho-DNA)-tyrosine intermediate is Tyr-280.

It belongs to the 'phage' integrase family. XerD subfamily. In terms of assembly, forms a cyclic heterotetrameric complex composed of two molecules of XerC and two molecules of XerD.

The protein resides in the cytoplasm. Its function is as follows. Site-specific tyrosine recombinase, which acts by catalyzing the cutting and rejoining of the recombining DNA molecules. The XerC-XerD complex is essential to convert dimers of the bacterial chromosome into monomers to permit their segregation at cell division. It also contributes to the segregational stability of plasmids. This chain is Tyrosine recombinase XerD, found in Chlamydia trachomatis serovar D (strain ATCC VR-885 / DSM 19411 / UW-3/Cx).